A 481-amino-acid chain; its full sequence is Glutamate--tRNA ligase (481 aa).

The 'HIGH' region signature appears at 28 to 38 (PSPTGFLHLGG). A compositionally biased stretch (basic and acidic residues) spans 139-148 (RYDGTWRPEP). Residues 139–159 (RYDGTWRPEPGKTLPPVPADR) form a disordered region. The 'KMSKS' region motif lies at 260–264 (KLSKR). Position 263 (Lys-263) interacts with ATP.

It belongs to the class-I aminoacyl-tRNA synthetase family. Glutamate--tRNA ligase type 1 subfamily. As to quaternary structure, monomer.

Its subcellular location is the cytoplasm. The enzyme catalyses tRNA(Glu) + L-glutamate + ATP = L-glutamyl-tRNA(Glu) + AMP + diphosphate. In terms of biological role, catalyzes the attachment of glutamate to tRNA(Glu) in a two-step reaction: glutamate is first activated by ATP to form Glu-AMP and then transferred to the acceptor end of tRNA(Glu). The protein is Glutamate--tRNA ligase of Bordetella parapertussis (strain 12822 / ATCC BAA-587 / NCTC 13253).